The following is a 240-amino-acid chain: tRNA (guanine-N(1)-)-methyltransferase (240 aa).

S-adenosyl-L-methionine-binding positions include glycine 108 and 127 to 132 (IGDYVL).

It belongs to the RNA methyltransferase TrmD family. In terms of assembly, homodimer.

It localises to the cytoplasm. It catalyses the reaction guanosine(37) in tRNA + S-adenosyl-L-methionine = N(1)-methylguanosine(37) in tRNA + S-adenosyl-L-homocysteine + H(+). Its function is as follows. Specifically methylates guanosine-37 in various tRNAs. The sequence is that of tRNA (guanine-N(1)-)-methyltransferase from Lactobacillus johnsonii (strain CNCM I-12250 / La1 / NCC 533).